Here is a 59-residue protein sequence, read N- to C-terminus: MSEIKIRENESLDNALRRFKRQCAKSGILSEVRKREHYEKPSVKRKKKAEAAKRNKSKF.

The interval 36–59 (EHYEKPSVKRKKKAEAAKRNKSKF) is disordered. Residues 43-59 (VKRKKKAEAAKRNKSKF) show a composition bias toward basic residues.

This sequence belongs to the bacterial ribosomal protein bS21 family.

The polypeptide is Small ribosomal subunit protein bS21 (Alkaliphilus oremlandii (strain OhILAs) (Clostridium oremlandii (strain OhILAs))).